The following is a 185-amino-acid chain: Peptidyl-tRNA hydrolase (185 aa).

TRNA is bound at residue Y14. H19 (proton acceptor) is an active-site residue. TRNA is bound by residues F64, N66, and N112.

This sequence belongs to the PTH family. As to quaternary structure, monomer.

It is found in the cytoplasm. The enzyme catalyses an N-acyl-L-alpha-aminoacyl-tRNA + H2O = an N-acyl-L-amino acid + a tRNA + H(+). In terms of biological role, hydrolyzes ribosome-free peptidyl-tRNAs (with 1 or more amino acids incorporated), which drop off the ribosome during protein synthesis, or as a result of ribosome stalling. Functionally, catalyzes the release of premature peptidyl moieties from peptidyl-tRNA molecules trapped in stalled 50S ribosomal subunits, and thus maintains levels of free tRNAs and 50S ribosomes. The polypeptide is Peptidyl-tRNA hydrolase (Latilactobacillus sakei subsp. sakei (strain 23K) (Lactobacillus sakei subsp. sakei)).